The sequence spans 449 residues: Tapasin (449 aa).

An N-terminal signal peptide occupies residues 1–20 (MKPLSLLLAVASALGTAVSA). Topologically, residues 21–413 (GPAVIECWMV…GLSGPSLEDS (393 aa)) are lumenal. Cys27 and Cys91 form a disulfide bridge. An N-linked (GlcNAc...) asparagine glycan is attached at Asn253. In terms of domain architecture, Ig-like C1-type spans 292-399 (PKISLTPAPL…PTLGRSAEVT (108 aa)). Cys315 and Cys382 are joined by a disulfide. Residues 414–434 (VGLFLSAFLLLGLIKALGWVA) form a helical membrane-spanning segment. Residues 435-449 (ASRSTSKDPKEKKAQ) are Cytoplasmic-facing.

As to quaternary structure, heterodimer with PDIA3; disulfide-linked. Obligatory mediator for the interaction between newly assembled MHC class I molecules, calreticulin, PDIA3 and TAP. Up to 4 MHC class I/tapasin complexes bind to 1 TAP. Interacts with HLA-G-B2M complex; this interaction is required for loading of high affinity peptides. On its own or as part of MHC class I peptide loading complex, interacts with ligand-free MR1 or MR1-B2M complex, providing for stable MR1 pools ready for metabolite antigen processing.

The protein resides in the endoplasmic reticulum membrane. Functionally, involved in the association of MHC class I with transporter associated with antigen processing (TAP) and in the assembly of MHC class I with peptide (peptide loading). The polypeptide is Tapasin (TAPBP) (Canis lupus familiaris (Dog)).